The sequence spans 199 residues: Thymidine kinase (199 aa).

ATP-binding positions include G23 to T30 and D95 to Q98. Residue E96 is the Proton acceptor of the active site. 4 residues coordinate Zn(2+): C152, C155, C184, and C187.

The protein belongs to the thymidine kinase family. As to quaternary structure, homotetramer.

The protein resides in the cytoplasm. The enzyme catalyses thymidine + ATP = dTMP + ADP + H(+). In Bacteroides fragilis (strain ATCC 25285 / DSM 2151 / CCUG 4856 / JCM 11019 / LMG 10263 / NCTC 9343 / Onslow / VPI 2553 / EN-2), this protein is Thymidine kinase.